We begin with the raw amino-acid sequence, 381 residues long: Sulfate/thiosulfate import ATP-binding protein CysA (381 aa).

Positions 3–233 (ILVYEVSKSL…PIDYFVGIFS (231 aa)) constitute an ABC transporter domain. 35–42 (GPSGSGKS) contacts ATP.

It belongs to the ABC transporter superfamily. Sulfate/tungstate importer (TC 3.A.1.6) family.

Its subcellular location is the plastid. The protein localises to the chloroplast. The catalysed reaction is sulfate(out) + ATP + H2O = sulfate(in) + ADP + phosphate + H(+). The enzyme catalyses thiosulfate(out) + ATP + H2O = thiosulfate(in) + ADP + phosphate + H(+). Functionally, part of the ABC transporter complex involved in sulfate/thiosulfate import. Responsible for energy coupling to the transport system. This is Sulfate/thiosulfate import ATP-binding protein CysA from Anthoceros angustus (Hornwort).